The sequence spans 211 residues: Arginine exporter protein ArgO (211 aa).

Helical transmembrane passes span 1-21 (MFTYYFQGLALGAAMILPLGP), 37-57 (LMIALLCAVSDLLLICAGIFG), 68-88 (LLAIVTWGGVAFLLWYGFGAL), 111-131 (IIITMLAVTWLNPHVYLDTFV), 147-167 (WFALGTISASFLWFFGLALLA), and 182-202 (IINIVVGAVMWFIAFQLAKEG).

The protein belongs to the LysE/ArgO transporter (TC 2.A.75) family.

It is found in the cell inner membrane. The catalysed reaction is L-arginine(in) = L-arginine(out). Functionally, involved in the export of arginine. Important to control the intracellular level of arginine and the correct balance between arginine and lysine. The protein is Arginine exporter protein ArgO of Klebsiella pneumoniae (strain 342).